Consider the following 682-residue polypeptide: Inactive protein-arginine deiminase type-6 (682 aa).

2 positions are modified to phosphoserine: Ser2 and Ser434.

The protein belongs to the protein arginine deiminase family. Homodimers. Associates with alpha-tubulin. Post-translationally, phosphorylation at Ser-2, possibly by RSK-type kinases, and Ser-434 creates binding sites for 14-3-3 proteins. In terms of tissue distribution, expressed at very high levels in oocytes. Weakly expressed in testis. Expressed in primordial, primary, secondary and Graafian follicles, and in immature oocytes, mature eggs and blastocyst (at protein level).

The protein localises to the cytoplasm. Its subcellular location is the nucleus. It is found in the cytoplasmic vesicle. It localises to the secretory vesicle. The protein resides in the cortical granule. Structural constituent of cytoplasmic lattices, which plays a key role in early embryonic development. Cytoplasmic lattices consist in fibrous structures found in the cytoplasm of oocytes and preimplantation embryos. They are required to store maternal proteins critical for embryonic development, such as ribosomal proteins and proteins that control epigenetic reprogramming of the preimplantation embryo, and prevent their degradation or activation. In contrast to other members of the family, does not show protein-arginine deiminase activity due to its inability to bind Ca(2+). In Mus musculus (Mouse), this protein is Inactive protein-arginine deiminase type-6.